We begin with the raw amino-acid sequence, 353 residues long: Ribosomal RNA large subunit methyltransferase M (353 aa).

S-adenosyl-L-methionine contacts are provided by residues S183, 216–219 (APGG), D235, D255, and D271. The active-site Proton acceptor is the K300.

The protein belongs to the class I-like SAM-binding methyltransferase superfamily. RNA methyltransferase RlmE family. RlmM subfamily. As to quaternary structure, monomer.

The protein localises to the cytoplasm. The enzyme catalyses cytidine(2498) in 23S rRNA + S-adenosyl-L-methionine = 2'-O-methylcytidine(2498) in 23S rRNA + S-adenosyl-L-homocysteine + H(+). Its function is as follows. Catalyzes the 2'-O-methylation at nucleotide C2498 in 23S rRNA. The protein is Ribosomal RNA large subunit methyltransferase M of Azotobacter vinelandii (strain DJ / ATCC BAA-1303).